Reading from the N-terminus, the 154-residue chain is Ascorbate-specific PTS system EIIA component (154 aa).

The PTS EIIA type-2 domain maps to 6-150 (SLAVNKSIRL…QEVLDLIDRT (145 aa)). His68 (tele-phosphohistidine intermediate) is an active-site residue. Residue His68 is modified to Phosphohistidine.

The protein localises to the cytoplasm. Its function is as follows. The phosphoenolpyruvate-dependent sugar phosphotransferase system (sugar PTS), a major carbohydrate active transport system, catalyzes the phosphorylation of incoming sugar substrates concomitantly with their translocation across the cell membrane. The enzyme II UlaABC PTS system is involved in ascorbate transport. The chain is Ascorbate-specific PTS system EIIA component (ulaC) from Shigella dysenteriae serotype 1 (strain Sd197).